Consider the following 427-residue polypeptide: Trigger factor (427 aa).

The PPIase FKBP-type domain occupies Gly163–Pro248.

Belongs to the FKBP-type PPIase family. Tig subfamily.

It localises to the cytoplasm. The catalysed reaction is [protein]-peptidylproline (omega=180) = [protein]-peptidylproline (omega=0). In terms of biological role, involved in protein export. Acts as a chaperone by maintaining the newly synthesized protein in an open conformation. Functions as a peptidyl-prolyl cis-trans isomerase. The chain is Trigger factor from Streptococcus thermophilus (strain CNRZ 1066).